Reading from the N-terminus, the 330-residue chain is Probable cytosolic iron-sulfur protein assembly protein 1 (330 aa).

7 WD repeats span residues 12–49, 56–95, 105–144, 151–190, 195–236, 248–286, and 292–330; these read LYKE…FTLI, AHKK…DRTF, GHEN…EEYE, EHSQ…WECV, GHEG…EDDQ, VHKR…WKVF, and CHGV…EKAA.

The protein belongs to the WD repeat CIA1 family. As to quaternary structure, interacts with NAR1.

It localises to the cytoplasm. The protein localises to the nucleus. Functionally, essential component of the cytosolic iron-sulfur (Fe/S) protein assembly machinery. Required for the maturation of extramitochondrial Fe/S proteins. The protein is Probable cytosolic iron-sulfur protein assembly protein 1 of Saccharomyces cerevisiae (strain YJM789) (Baker's yeast).